The following is a 326-amino-acid chain: uncharacterized protein (326 aa).

This is an uncharacterized protein from Escherichia coli (strain K12).